We begin with the raw amino-acid sequence, 426 residues long: Glutamate-1-semialdehyde 2,1-aminomutase (426 aa).

K265 carries the post-translational modification N6-(pyridoxal phosphate)lysine.

The protein belongs to the class-III pyridoxal-phosphate-dependent aminotransferase family. HemL subfamily. In terms of assembly, homodimer. Requires pyridoxal 5'-phosphate as cofactor.

It localises to the cytoplasm. It carries out the reaction (S)-4-amino-5-oxopentanoate = 5-aminolevulinate. It participates in porphyrin-containing compound metabolism; protoporphyrin-IX biosynthesis; 5-aminolevulinate from L-glutamyl-tRNA(Glu): step 2/2. This chain is Glutamate-1-semialdehyde 2,1-aminomutase, found in Klebsiella pneumoniae (strain 342).